The primary structure comprises 606 residues: Double-stranded RNA-binding protein Staufen homolog 2 (606 aa).

2 consecutive DRBM domains span residues 8–75 and 95–181; these read TPMC…ESSL and TPTV…ALKN. Disordered regions lie at residues 57-97 and 177-205; these read SIKK…ITPT and QALK…SDAS. Polar residues predominate over residues 85 to 97; that stretch reads ADSNSNPGSITPT. Positions 192 to 205 are enriched in basic and acidic residues; that stretch reads SEEKKETEENSDAS. DRBM domains lie at 207 to 274, 307 to 375, and 493 to 557; these read SEIS…ELKK, NPIS…QLGY, and QPSQ…QLSE. The tract at residues 580 to 606 is disordered; sequence RLAERTESKPTNSGTTAQDCKDSKAVV. Positions 588-597 are enriched in polar residues; the sequence is KPTNSGTTAQ.

Its function is as follows. RNA-binding protein required for the microtubule-dependent transport of RNAs within polarized cell types. This Danio rerio (Zebrafish) protein is Double-stranded RNA-binding protein Staufen homolog 2 (stau2).